Consider the following 691-residue polypeptide: MAPVEDGGGVEFPVGMKVLVVDDDPTCLAVLKRMLLECRYDATTCSQATRALTMLRENRRGFDVIISDVHMPDMDGFRLLELVGLEMDLPVIMMSADSRTDIVMKGIKHGACDYLIKPVRMEELKNIWQHVIRKKFNENKEHEHSGSLDDTDRTRPTNNDNEYASSANDGAEGSWKSQKKKRDKDDDDGELESGDPSSTSKKPRVVWSVELHQQFVNAVNHLGIDKAVPKKILELMNVPGLTRENVASHLQKFRLYLKRIAQHHAGIANPFCPPASSGKVGSLGGLDFQALAASGQIPPQALAALQDELLGRPTNSLVLPGRDQSSLRLAAVKGNKPHGEREIAFGQPIYKCQNNAYGAFPQSSPAVGGMPSFSAWPNNKLGMADSTGTLGGMSNSQNSNIVLHELQQQPDAMLSGTLHSLDVKPSGIVMPSQSLNTFSASEGLSPNQNTLMIPAQSSGFLAAMPPSMKHEPVLATSQPSSSLLGGIDLVNQASTSQPLISAHGGGNLSGLVNRNPNVVPSQGISTFHTPNNPYLVSPNSMGVGSKQPPGVLKTENSDALNHSYGYLGGSNPPMDSGLLSSQSKNTQFGLLGQDDITGSWSPLPNVDSYGNTVGLSHPGSSSSSFQSSNVALGKLPDQGRGKNHGFVGKGTCIPSRFAVDEIESPTNNLSHSIGSSGDIMSPDIFGFSGQM.

The region spanning 17–132 (KVLVVDDDPT…ELKNIWQHVI (116 aa)) is the Response regulatory domain. The residue at position 68 (aspartate 68) is a 4-aspartylphosphate. Positions 139-155 (NKEHEHSGSLDDTDRTR) are enriched in basic and acidic residues. Disordered stretches follow at residues 139–204 (NKEH…KKPR) and 616–647 (SHPGSSSSSFQSSNVALGKLPDQGRGKNHGFV). The myb-like GARP DNA-binding region spans 199–258 (TSKKPRVVWSVELHQQFVNAVNHLGIDKAVPKKILELMNVPGLTRENVASHLQKFRLYLK). Low complexity predominate over residues 616 to 628 (SHPGSSSSSFQSS).

This sequence belongs to the ARR family. Type-B subfamily. In terms of processing, two-component system major event consists of a His-to-Asp phosphorelay between a sensor histidine kinase (HK) and a response regulator (RR). In plants, the His-to-Asp phosphorelay involves an additional intermediate named Histidine-containing phosphotransfer protein (HPt). This multistep phosphorelay consists of a His-Asp-His-Asp sequential transfer of a phosphate group between first a His and an Asp of the HK protein, followed by the transfer to a conserved His of the HPt protein and finally the transfer to an Asp in the receiver domain of the RR protein.

Its subcellular location is the nucleus. Transcriptional activator that binds specific DNA sequence. Functions as a response regulator involved in His-to-Asp phosphorelay signal transduction system. Phosphorylation of the Asp residue in the receiver domain activates the ability of the protein to promote the transcription of target genes. May directly activate some type-A response regulators in response to cytokinins. In Oryza sativa subsp. indica (Rice), this protein is Two-component response regulator ORR21.